Here is a 696-residue protein sequence, read N- to C-terminus: Polyribonucleotide nucleotidyltransferase (696 aa).

Residues Asp489 and Asp495 each coordinate Mg(2+). A KH domain is found at 556–615 (PQYVTMKINPEKIRDVIGKGGVVIREITEATNCAIDISDDGTIKIAAHTTEEGEAAKRRI). An S1 motif domain is found at 625–693 (GKVYEGTVVK…RQGRVRLSMK (69 aa)).

The protein belongs to the polyribonucleotide nucleotidyltransferase family. In terms of assembly, component of the RNA degradosome, which is a multiprotein complex involved in RNA processing and mRNA degradation. Mg(2+) is required as a cofactor.

It localises to the cytoplasm. The catalysed reaction is RNA(n+1) + phosphate = RNA(n) + a ribonucleoside 5'-diphosphate. Functionally, involved in mRNA degradation. Catalyzes the phosphorolysis of single-stranded polyribonucleotides processively in the 3'- to 5'-direction. The chain is Polyribonucleotide nucleotidyltransferase from Coxiella burnetii (strain CbuG_Q212) (Coxiella burnetii (strain Q212)).